We begin with the raw amino-acid sequence, 743 residues long: 1,4-alpha-glucan branching enzyme GlgB (743 aa).

D423 (nucleophile) is an active-site residue. The Proton donor role is filled by E476.

It belongs to the glycosyl hydrolase 13 family. GlgB subfamily. Monomer.

The enzyme catalyses Transfers a segment of a (1-&gt;4)-alpha-D-glucan chain to a primary hydroxy group in a similar glucan chain.. It participates in glycan biosynthesis; glycogen biosynthesis. Its function is as follows. Catalyzes the formation of the alpha-1,6-glucosidic linkages in glycogen by scission of a 1,4-alpha-linked oligosaccharide from growing alpha-1,4-glucan chains and the subsequent attachment of the oligosaccharide to the alpha-1,6 position. In Pseudomonas fluorescens (strain Pf0-1), this protein is 1,4-alpha-glucan branching enzyme GlgB.